A 202-amino-acid polypeptide reads, in one-letter code: Glycerol-3-phosphate acyltransferase (202 aa).

6 helical membrane passes run 2 to 22 (MIVLMLLLAYIVGSFPSGVII), 54 to 74 (FVVTFLDIFKGFIVVFFPLLF), 85 to 105 (FFTNGLIVGVFAILGHVYPIF), 118 to 138 (AGVVLGVAPILLLILAAIFFL), 140 to 160 (LYLTKYVSLSSIVAAICCVIG), and 162 to 182 (LIIHDYILLVVSIIVAILLIF).

The protein belongs to the PlsY family. In terms of assembly, probably interacts with PlsX.

It localises to the cell membrane. It catalyses the reaction an acyl phosphate + sn-glycerol 3-phosphate = a 1-acyl-sn-glycero-3-phosphate + phosphate. It participates in lipid metabolism; phospholipid metabolism. Catalyzes the transfer of an acyl group from acyl-phosphate (acyl-PO(4)) to glycerol-3-phosphate (G3P) to form lysophosphatidic acid (LPA). This enzyme utilizes acyl-phosphate as fatty acyl donor, but not acyl-CoA or acyl-ACP. The polypeptide is Glycerol-3-phosphate acyltransferase (Staphylococcus carnosus (strain TM300)).